A 444-amino-acid polypeptide reads, in one-letter code: N-succinylarginine dihydrolase (444 aa).

Substrate is bound by residues 19–28, Asn110, and 137–138; these read AGLSFGNVAS and HR. The active site involves Glu174. Arg214 contacts substrate. His250 is a catalytic residue. Substrate contacts are provided by Asp252 and Asn362. Catalysis depends on Cys368, which acts as the Nucleophile.

The protein belongs to the succinylarginine dihydrolase family. Homodimer.

The catalysed reaction is N(2)-succinyl-L-arginine + 2 H2O + 2 H(+) = N(2)-succinyl-L-ornithine + 2 NH4(+) + CO2. It participates in amino-acid degradation; L-arginine degradation via AST pathway; L-glutamate and succinate from L-arginine: step 2/5. Catalyzes the hydrolysis of N(2)-succinylarginine into N(2)-succinylornithine, ammonia and CO(2). The sequence is that of N-succinylarginine dihydrolase from Shewanella denitrificans (strain OS217 / ATCC BAA-1090 / DSM 15013).